A 1157-amino-acid chain; its full sequence is Folliculin-interacting protein 1 (1157 aa).

The uDENN FNIP1/2-type domain occupies 37–467 (FDPSQIRLIV…TVMPNGQPPI (431 aa)). 4 disordered regions span residues 92–120 (PGGDSSSSLDSSINSSSSFSDAKEQCPKY), 616–665 (SQQE…TKVE), 769–796 (SPPTAEEGVSADQNCEAKQTVEDQNRDC), and 904–955 (VPHG…NYYG). Over residues 95–111 (DSSSSLDSSINSSSSFS) the composition is skewed to low complexity. Residues 475-1083 (SSQSVDMLAK…VSNLLHSTLQ (609 aa)) enclose the cDENN FNIP1/2-type domain. Basic and acidic residues predominate over residues 651–664 (ADGHQPRTCQDTKV). Positions 904 to 916 (VPHGDRENAEKKV) are enriched in basic and acidic residues. The dDENN FNIP1/2-type domain occupies 1093–1148 (FCVMHLEDRLQELYFKSKMLSEYLKGQMRVHVKELGVVLGIESSDLPLLAAVASTH).

This sequence belongs to the FNIP family. As to quaternary structure, homodimer and homomultimer. Heterodimer and heteromultimer with FNIP2. Component of the lysosomal folliculin complex (LFC).

It localises to the lysosome membrane. The protein resides in the cytoplasm. The protein localises to the cytosol. In terms of biological role, binding partner of the GTPase-activating protein FLCN: involved in the cellular response to amino acid availability by regulating the non-canonical mTORC1 signaling cascade controlling the MiT/TFE factors TFEB and TFE3. Required to promote FLCN recruitment to lysosomes and interaction with Rag GTPases, leading to activation of the non-canonical mTORC1 signaling. In low-amino acid conditions, component of the lysosomal folliculin complex (LFC) on the membrane of lysosomes, which inhibits the GTPase-activating activity of FLCN, thereby inactivating mTORC1 and promoting nuclear translocation of TFEB and TFE3. Upon amino acid restimulation, disassembly of the LFC complex liberates the GTPase-activating activity of FLCN, leading to activation of mTORC1 and subsequent inactivation of TFEB and TFE3. In addition to its role in mTORC1 signaling, also acts as a co-chaperone of HSP90AA1/Hsp90: inhibits the ATPase activity of HSP90AA1/Hsp90, leading to activate both kinase and non-kinase client proteins of HSP90AA1/Hsp90. Acts as a scaffold to load client protein FLCN onto HSP90AA1/Hsp90. The protein is Folliculin-interacting protein 1 of Gallus gallus (Chicken).